The primary structure comprises 179 residues: FAD-dependent monooxygenase nscC (179 aa).

The N-terminal stretch at 1–21 (MGKQQETILIIGAGISGLATS) is a signal peptide. FAD-binding residues include glutamate 35 and alanine 46. A glycan (N-linked (GlcNAc...) asparagine) is linked at asparagine 92. Arginine 119 is an FAD binding site. A glycan (N-linked (GlcNAc...) asparagine) is linked at asparagine 170.

The protein belongs to the paxM FAD-dependent monooxygenase family. FAD serves as cofactor.

It functions in the pathway secondary metabolite biosynthesis. Its function is as follows. FAD-dependent monooxygenase; part of the gene cluster that mediates the biosynthesis of neosartoricin B, a prenylated anthracenone that probably exhibits T-cell antiproliferative activity, suggestive of a physiological role as an immunosuppressive agent. The non-reducing polyketide synthase nscA probably synthesizes and cyclizes the decaketide backbone. The hydrolase nscB then mediates the product release through hydrolysis followed by spontaneous decarboxylation. The prenyltransferase nscD catalyzes the addition of the dimethylallyl group to the aromatic C5. The FAD-dependent monooxygenase nscC is then responsible for the stereospecific hydroxylation at C2. Neosartoricin B can be converted into two additional compounds neosartoricins C and D. Neosartoricin C is a spirocyclic compound that is cyclized through the attack of C3 hydroxyl on C14, followed by dehydration. On the other hand, neosartoricin D is a further cyclized compound in which attack of C2 on C14 in neosartoricin C results in the formation of the acetal-containing dioxabicyclo-octanone ring. Both of these compounds are novel and possibly represent related metabolites of the gene cluster. The polypeptide is FAD-dependent monooxygenase nscC (Trichophyton equinum (strain ATCC MYA-4606 / CBS 127.97) (Horse ringworm fungus)).